Here is a 141-residue protein sequence, read N- to C-terminus: Large ribosomal subunit protein uL11 (141 aa).

Belongs to the universal ribosomal protein uL11 family. As to quaternary structure, part of the ribosomal stalk of the 50S ribosomal subunit. Interacts with L10 and the large rRNA to form the base of the stalk. L10 forms an elongated spine to which L12 dimers bind in a sequential fashion forming a multimeric L10(L12)X complex. In terms of processing, one or more lysine residues are methylated.

Functionally, forms part of the ribosomal stalk which helps the ribosome interact with GTP-bound translation factors. The protein is Large ribosomal subunit protein uL11 of Prosthecochloris aestuarii (strain DSM 271 / SK 413).